The primary structure comprises 327 residues: Arabinose 5-phosphate isomerase KpsF (327 aa).

Residues 48–191 (VLNLIMNCKG…AIAMIHQRKF (144 aa)) enclose the SIS domain. Residue 63-68 (GMGKSG) coordinates ATP. Substrate contacts are provided by residues 82 to 83 (GT), His89, His95, 121 to 130 (KLVPSLKNFG), and 155 to 157 (HMA). His89 provides a ligand contact to Zn(2+). CBS domains follow at residues 217 to 273 (MQHD…EGSL) and 282 to 327 (MTRE…RIFD).

In terms of assembly, homotetramer.

The catalysed reaction is D-arabinose 5-phosphate = D-ribulose 5-phosphate. With respect to regulation, inhibited by 10 uM zinc, cadmium or mercury ions. Involved in the biosynthesis of K-antigen capsules. Catalyzes the reversible aldol-ketol isomerization between D-ribulose 5-phosphate (Ru5P) and D-arabinose 5-phosphate (A5P). This Escherichia coli O6:H1 (strain CFT073 / ATCC 700928 / UPEC) protein is Arabinose 5-phosphate isomerase KpsF.